The primary structure comprises 129 residues: Glycine cleavage system H protein (129 aa).

In terms of domain architecture, Lipoyl-binding spans 24–106; sequence LVRVGLSAYA…HGEGWLLVIR (83 aa). N6-lipoyllysine is present on Lys65.

Belongs to the GcvH family. As to quaternary structure, the glycine cleavage system is composed of four proteins: P, T, L and H. The cofactor is (R)-lipoate.

Functionally, the glycine cleavage system catalyzes the degradation of glycine. The H protein shuttles the methylamine group of glycine from the P protein to the T protein. The protein is Glycine cleavage system H protein of Synechococcus sp. (strain CC9311).